We begin with the raw amino-acid sequence, 105 residues long: DNA-directed RNA polymerase subunit omega (105 aa).

This sequence belongs to the RNA polymerase subunit omega family. The RNAP catalytic core consists of 2 alpha, 1 beta, 1 beta' and 1 omega subunit. When a sigma factor is associated with the core the holoenzyme is formed, which can initiate transcription.

It catalyses the reaction RNA(n) + a ribonucleoside 5'-triphosphate = RNA(n+1) + diphosphate. In terms of biological role, promotes RNA polymerase assembly. Latches the N- and C-terminal regions of the beta' subunit thereby facilitating its interaction with the beta and alpha subunits. The protein is DNA-directed RNA polymerase subunit omega of Streptococcus uberis (strain ATCC BAA-854 / 0140J).